A 442-amino-acid chain; its full sequence is Serum response factor-binding protein 1 (442 aa).

2 coiled-coil regions span residues 55–77 and 118–140; these read EDAL…AMKE and LLKR…RQNA. 2 disordered regions span residues 137–336 and 358–442; these read RQNA…LETH and FHSL…TFDD. Basic and acidic residues-rich tracts occupy residues 149–159 and 167–188; these read ASKESQCEDIP and ESQH…DPTT. Lys-202 participates in a covalent cross-link: Glycyl lysine isopeptide (Lys-Gly) (interchain with G-Cter in SUMO2). The residue at position 215 (Ser-215) is a Phosphoserine. The segment covering 237 to 247 has biased composition (polar residues); the sequence is GNHSQGKASTR. Residues 266–278 show a composition bias toward acidic residues; it reads VSEEEKEYFDDST. Ser-277, Ser-292, and Ser-294 each carry phosphoserine. Lys-329 participates in a covalent cross-link: Glycyl lysine isopeptide (Lys-Gly) (interchain with G-Cter in SUMO2). At Ser-362 the chain carries Phosphoserine. The segment covering 367-382 has biased composition (basic and acidic residues); the sequence is SRRDPREQAPKNKAPD.

In terms of assembly, interacts with SRF. Forms complexes with SRF and SRF cofactors ARID2, MYOCD and NKX2-5. Interacts with the N-terminus of SLC2A4.

Its subcellular location is the cytoplasm. It localises to the perinuclear region. May be involved in regulating transcriptional activation of cardiac genes during the aging process. May play a role in biosynthesis and/or processing of SLC2A4 in adipose cells. The protein is Serum response factor-binding protein 1 of Rattus norvegicus (Rat).